The sequence spans 369 residues: Methylthioribose-1-phosphate isomerase (369 aa).

Met1 carries the N-acetylmethionine modification. Arg158 carries the post-translational modification Omega-N-methylarginine. Asp248 (proton donor) is an active-site residue. The residue at position 366 (Ser366) is a Phosphoserine.

It belongs to the eIF-2B alpha/beta/delta subunits family. MtnA subfamily.

The protein localises to the cytoplasm. Its subcellular location is the nucleus. The catalysed reaction is 5-(methylsulfanyl)-alpha-D-ribose 1-phosphate = 5-(methylsulfanyl)-D-ribulose 1-phosphate. It participates in amino-acid biosynthesis; L-methionine biosynthesis via salvage pathway; L-methionine from S-methyl-5-thio-alpha-D-ribose 1-phosphate: step 1/6. Functionally, catalyzes the interconversion of methylthioribose-1-phosphate (MTR-1-P) into methylthioribulose-1-phosphate (MTRu-1-P). This Mus musculus (Mouse) protein is Methylthioribose-1-phosphate isomerase (Mri1).